The primary structure comprises 549 residues: Fumarate hydratase 1, mitochondrial (549 aa).

Residue Cys-114 participates in [4Fe-4S] cluster binding. (S)-malate is bound by residues 115 to 116, Arg-154, Gly-197, and 200 to 206; these read QD and NKSFLLQ. Residues Cys-233 and Cys-328 each contribute to the [4Fe-4S] cluster site. Residues Arg-404, 450–454, and Lys-474 each bind (S)-malate; that span reads TTAGR.

The protein belongs to the class-I fumarase family. As to quaternary structure, homodimer. The cofactor is [4Fe-4S] cluster.

The protein resides in the mitochondrion. It catalyses the reaction (S)-malate = fumarate + H2O. It functions in the pathway carbohydrate metabolism; tricarboxylic acid cycle; (S)-malate from fumarate: step 1/1. Its activity is regulated as follows. Specifically and competitively inhibited by 2-thiomalate, which coordinates with the catalytic [4Fe-4S] cluster. Catalyzes the reversible hydration of fumarate to (S)-malate. Catalyzes the hydration of fumarate to L-malate in the tricarboxylic acid (TCA) cycle to facilitate a transition step in the production of energy in the form of NADH. This chain is Fumarate hydratase 1, mitochondrial, found in Leishmania major.